The following is a 469-amino-acid chain: DNA (cytosine-5-)-methyltransferase M.ApeKI (469 aa).

An SAM-dependent MTase C5-type domain is found at 4 to 469 (YSTISLFSGA…EALAEVLDAV (466 aa)). C93 is an active-site residue.

This sequence belongs to the class I-like SAM-binding methyltransferase superfamily. C5-methyltransferase family.

The enzyme catalyses a 2'-deoxycytidine in DNA + S-adenosyl-L-methionine = a 5-methyl-2'-deoxycytidine in DNA + S-adenosyl-L-homocysteine + H(+). Its function is as follows. Cytosine methylase that recognizes the double-stranded sequence 5'-GC(A/T)GC-3', methylates C-5 position of the second cytosine on both strands, and protects the DNA from cleavage by the ApeKI endonuclease. The sequence is that of DNA (cytosine-5-)-methyltransferase M.ApeKI from Aeropyrum pernix (strain ATCC 700893 / DSM 11879 / JCM 9820 / NBRC 100138 / K1).